We begin with the raw amino-acid sequence, 177 residues long: Large ribosomal subunit protein uL6 (177 aa).

This sequence belongs to the universal ribosomal protein uL6 family. In terms of assembly, part of the 50S ribosomal subunit.

Functionally, this protein binds to the 23S rRNA, and is important in its secondary structure. It is located near the subunit interface in the base of the L7/L12 stalk, and near the tRNA binding site of the peptidyltransferase center. This chain is Large ribosomal subunit protein uL6, found in Brucella abortus (strain S19).